Here is a 66-residue protein sequence, read N- to C-terminus: Large ribosomal subunit protein uL29 (66 aa).

Belongs to the universal ribosomal protein uL29 family.

The sequence is that of Large ribosomal subunit protein uL29 from Nitrosococcus oceani (strain ATCC 19707 / BCRC 17464 / JCM 30415 / NCIMB 11848 / C-107).